The chain runs to 131 residues: Fumarate reductase subunit C (131 aa).

Transmembrane regions (helical) follow at residues 30-50 (EGTA…LFAL), 61-81 (IGFL…AAAL), and 110-130 (IKGL…VALF).

Belongs to the FrdC family. Part of an enzyme complex containing four subunits: a flavoprotein (FrdA), an iron-sulfur protein (FrdB), and two hydrophobic anchor proteins (FrdC and FrdD).

The protein localises to the cell inner membrane. Two distinct, membrane-bound, FAD-containing enzymes are responsible for the catalysis of fumarate and succinate interconversion; fumarate reductase is used in anaerobic growth, and succinate dehydrogenase is used in aerobic growth. Anchors the catalytic components of the fumarate reductase complex to the cell inner membrane, binds quinones. In Klebsiella pneumoniae (strain 342), this protein is Fumarate reductase subunit C.